Consider the following 223-residue polypeptide: Type II restriction enzyme BglII (223 aa).

2 residues coordinate Mg(2+): Asp84 and Val94.

Homodimer. It depends on Mg(2+) as a cofactor.

It catalyses the reaction Endonucleolytic cleavage of DNA to give specific double-stranded fragments with terminal 5'-phosphates.. In terms of biological role, a P subtype restriction enzyme that recognizes the double-stranded sequence 5'-AGATCT-3' and cleaves after A-1. The sequence is that of Type II restriction enzyme BglII (bglIIR) from Bacillus subtilis.